The sequence spans 178 residues: Probetacellulin (178 aa).

A signal peptide spans 1–31 (MARAAPGSGASPLPLLPALALGLVILHCVVA). Residues 32 to 118 (DGNSTRSPED…LFYLRGDRGQ (87 aa)) are Extracellular-facing. Asn34 carries an N-linked (GlcNAc...) asparagine glycan. One can recognise an EGF-like domain in the interval 65-105 (HFSRCPKQYKHYCIKGRCRFVVAEQTPSCVCDEGYAGARCE). 3 disulfide bridges follow: Cys69-Cys82, Cys77-Cys93, and Cys95-Cys104. The propeptide at 112–178 (LRGDRGQILV…NDDIQETSIA (67 aa)) is removed in mature form. A helical transmembrane segment spans residues 119–139 (ILVICLIAVMVIFIILVVSIC). Residues 140–178 (TCCHPLRKRRKRRKKEEEMETLGKDITPINDDIQETSIA) are Cytoplasmic-facing.

As to quaternary structure, monomer. Interacts with EGFR and ERBB4. Expressed in a wide range of tissues, including the mammary gland.

It localises to the secreted. It is found in the extracellular space. The protein resides in the cell membrane. Its function is as follows. Growth factor that binds to EGFR, ERBB4 and other EGF receptor family members. Potent mitogen for retinal pigment epithelial cells and vascular smooth muscle cells. This chain is Probetacellulin (BTC), found in Bos taurus (Bovine).